The chain runs to 1419 residues: Multidrug resistance protein 1 (1419 aa).

Residues 1-37 are r domain; regulates transporter activity; sequence MGKEQKEKKDGNLSIKEEVEKELNKKSTAELFRKIKN. Over 1-60 the chain is Cytoplasmic; that stretch reads MGKEQKEKKDGNLSIKEEVEKELNKKSTAELFRKIKNEKISFFLPFKCLPAQHRKLLFIS. The region spanning 58 to 345 is the ABC transmembrane type-1 1 domain; the sequence is FISFVCAVLS…ILPNITEYMK (288 aa). The helical transmembrane segment at 61-81 threads the bilayer; that stretch reads FVCAVLSGGTLPFFISVFGVI. The Vacuolar segment spans residues 82–90; the sequence is LKNMNLGDD. The chain crosses the membrane as a helical span at residues 91–111; it reads INPIILSLVSIGLVQFILSMI. Over 112–168 the chain is Cytoplasmic; sequence SSYCMDVITSKILKTLKLEYLRSVFYQDGQFHDNNPGSKLRSDLDFYLEQVSSGIGT. The chain crosses the membrane as a helical span at residues 169-189; sequence KFITIFTYASSFLGLYIWSLI. Residues 190-191 are Vacuolar-facing; it reads KN. The chain crosses the membrane as a helical span at residues 192-212; the sequence is ARLTLCITCVFPLIYVCGVIC. Residues 213–275 lie on the Cytoplasmic side of the membrane; that stretch reads NKKVKLNKKT…KYILKANFVE (63 aa). A helical membrane pass occupies residues 276–296; that stretch reads ALHIGLINGLILVSYAFGFWY. Over 297–316 the chain is Vacuolar; that stretch reads GTRIIINSATNQYPNNDFNG. The helical transmembrane segment at 317 to 337 threads the bilayer; it reads ASVISILLGVLISMFMLTIIL. The Cytoplasmic segment spans residues 338–788; that stretch reads PNITEYMKAL…YKEIFSYKKD (451 aa). The ABC transporter 1 domain maps to 378-662; the sequence is IEFKNVRFHY…NNNNNNNNNK (285 aa). Tyr-387, Thr-389, Arg-390, Ser-415, Cys-417, Gly-418, Lys-419, Ser-420, Thr-421, Gln-462, Lys-562, Ser-564, Gly-566, and Gln-567 together coordinate ATP. Gln-462 lines the Mg(2+) pocket. Disordered regions lie at residues 639–665 and 697–752; these read ERSD…KINN and SSNK…TAEN. Composition is skewed to low complexity over residues 643–665 and 697–715; these read NNNN…KINN and SSNK…NKSS. The segment covering 723-749 has biased composition (polar residues); it reads GNDADNMNSLSIHENENISNNRNCKNT. The helical transmembrane segment at 789-809 threads the bilayer; the sequence is VTIIFFSILVAGGLYPVFALL. The 293-residue stretch at 791-1083 folds into the ABC transmembrane type-1 2 domain; the sequence is IIFFSILVAG…GSYAGKLMSL (293 aa). Topologically, residues 810–829 are vacuolar; sequence YARYVSTLFDFANLEYNSNK. A helical transmembrane segment spans residues 830–850; sequence YSIYILLIAIAMFISETLKNY. At 851-907 the chain is on the cytoplasmic side; the sequence is YNNKIGEKVEKTMKRRLFENILYQEMSFFDQDKNTPGVLSAHINRDVHLLKTGLVNN. 2 helical membrane-spanning segments follow: residues 908–928 and 929–949; these read IVIF…SFYF and CPIV…VFAV. At 950–1032 the chain is on the cytoplasmic side; sequence RARLTKSKEI…RIIVNAALWG (83 aa). The helical transmembrane segment at 1033 to 1053 threads the bilayer; that stretch reads FSQSAQLFINSFAYWFGSFLI. At 1054–1057 the chain is on the vacuolar side; that stretch reads KRGT. A helical membrane pass occupies residues 1058–1078; it reads ILVDDFMKSLFTFIFTGSYAG. Over 1079 to 1419 the chain is Cytoplasmic; that stretch reads KLMSLKGDSE…IYKKYVKLAK (341 aa). Positions 1126–1416 constitute an ABC transporter 2 domain; it reads VDIKDVNFRY…QDGIYKKYVK (291 aa). 13 residues coordinate ATP: Tyr-1135, Arg-1138, Thr-1163, Gly-1164, Gly-1166, Lys-1167, Ser-1168, Thr-1169, Gln-1256, Leu-1312, Ser-1313, Gly-1315, and Gln-1316. Ser-1168 contacts Mg(2+). Gln-1256 is a binding site for Mg(2+).

The protein belongs to the ABC transporter superfamily. ABCB family. Multidrug resistance exporter (TC 3.A.1.201) subfamily.

Its subcellular location is the vacuole membrane. It carries out the reaction ATP + H2O + xenobioticSide 1 = ADP + phosphate + xenobioticSide 2.. Energy-dependent efflux pump responsible for decreased drug accumulation in multidrug-resistant cells. Transports lumefantrine, mefloquine, chloroquine, quinine, quinidine, amodiaquine, piperaquine, dihydroartemisinin and quinacrine. The protein is Multidrug resistance protein 1 of Plasmodium falciparum (isolate 3D7).